The chain runs to 236 residues: Putative glutamine amidotransferase-like protein YvdE (236 aa).

Residues 17-236 enclose the Glutamine amidotransferase type-1 domain; sequence SPFWWNKVSY…IFEIFANGTI (220 aa).

This chain is Putative glutamine amidotransferase-like protein YvdE (yvdE), found in Lactococcus lactis subsp. lactis (strain IL1403) (Streptococcus lactis).